The following is a 55-amino-acid chain: U-reduvitoxin-Pr2a (55 aa).

Positions 1-21 (MMKFLLVLFLITITLITMAYS) are cleaved as a signal peptide. Intrachain disulfides connect Cys-26-Cys-41, Cys-33-Cys-46, and Cys-40-Cys-51.

The protein belongs to the venom Ptu1-like knottin family. Expressed by the venom gland (posterior main gland) (at protein level).

It localises to the secreted. In terms of biological role, binds reversibly and blocks P/Q-type voltage-gated calcium channels (Cav). This Platymeris rhadamanthus (Red spot assassin bug) protein is U-reduvitoxin-Pr2a.